Consider the following 338-residue polypeptide: Ketol-acid reductoisomerase (NADP(+)) (338 aa).

The KARI N-terminal Rossmann domain occupies 1 to 181 (MKVFYDKDAD…GGGKAGIIET (181 aa)). NADP(+)-binding positions include 24-27 (YGSQ), arginine 47, and serine 52. Histidine 107 is an active-site residue. Residue glycine 133 participates in NADP(+) binding. In terms of domain architecture, KARI C-terminal knotted spans 182–327 (NFREETETDL…EKLRAMMPWI (146 aa)). Mg(2+)-binding residues include aspartate 190, glutamate 194, glutamate 226, and glutamate 230. Substrate is bound at residue serine 251.

Belongs to the ketol-acid reductoisomerase family. The cofactor is Mg(2+).

It carries out the reaction (2R)-2,3-dihydroxy-3-methylbutanoate + NADP(+) = (2S)-2-acetolactate + NADPH + H(+). It catalyses the reaction (2R,3R)-2,3-dihydroxy-3-methylpentanoate + NADP(+) = (S)-2-ethyl-2-hydroxy-3-oxobutanoate + NADPH + H(+). Its pathway is amino-acid biosynthesis; L-isoleucine biosynthesis; L-isoleucine from 2-oxobutanoate: step 2/4. It participates in amino-acid biosynthesis; L-valine biosynthesis; L-valine from pyruvate: step 2/4. Involved in the biosynthesis of branched-chain amino acids (BCAA). Catalyzes an alkyl-migration followed by a ketol-acid reduction of (S)-2-acetolactate (S2AL) to yield (R)-2,3-dihydroxy-isovalerate. In the isomerase reaction, S2AL is rearranged via a Mg-dependent methyl migration to produce 3-hydroxy-3-methyl-2-ketobutyrate (HMKB). In the reductase reaction, this 2-ketoacid undergoes a metal-dependent reduction by NADPH to yield (R)-2,3-dihydroxy-isovalerate. The sequence is that of Ketol-acid reductoisomerase (NADP(+)) from Leptothrix cholodnii (strain ATCC 51168 / LMG 8142 / SP-6) (Leptothrix discophora (strain SP-6)).